A 103-amino-acid polypeptide reads, in one-letter code: Acylphosphatase-2 (103 aa).

Ser2 carries the post-translational modification N-acetylserine. The region spanning 13 to 103 (SVDYEVFGRV…LDFSGFSTRY (91 aa)) is the Acylphosphatase-like domain. Active-site residues include Arg28 and Asn46.

The protein belongs to the acylphosphatase family.

The catalysed reaction is an acyl phosphate + H2O = a carboxylate + phosphate + H(+). Functionally, its physiological role is not yet clear. This chain is Acylphosphatase-2 (ACYP2), found in Anas platyrhynchos (Mallard).